A 374-amino-acid polypeptide reads, in one-letter code: Isocitrate dehydrogenase [NAD] catalytic subunit 5, mitochondrial (374 aa).

A mitochondrion-targeting transit peptide spans 1 to 44 (MTMAANLARRLIGNRSTQILGAVNSSSGAASSVARAFCSSTTPI). Substrate is bound by residues R127, R137, R158, and D245. The Mg(2+) site is built by D245, D269, and D273.

Belongs to the isocitrate and isopropylmalate dehydrogenases family. As to quaternary structure, heterooligomer of catalytic and regulatory subunits. Mg(2+) is required as a cofactor. Requires Mn(2+) as cofactor. In terms of tissue distribution, ubiquitous.

It is found in the mitochondrion. It catalyses the reaction D-threo-isocitrate + NAD(+) = 2-oxoglutarate + CO2 + NADH. In terms of biological role, performs an essential role in the oxidative function of the citric acid cycle. This is Isocitrate dehydrogenase [NAD] catalytic subunit 5, mitochondrial (IDH5) from Arabidopsis thaliana (Mouse-ear cress).